A 168-amino-acid chain; its full sequence is MGRAFYIGRFQPYHYGHQSVLKRIAETADEIIIGIGSAQLSHEVNNPFTAGERVLMITRALAHLDCPYYVIPIEDIQRNALWVAHVRSMTPPFDRVYSSNPLVVRLFAEVGISVESPSMYERETHCGTAIRELMLNGEPWEDRVPPAVVSVIREIDGVERLQQIAGSD.

Belongs to the archaeal NMN adenylyltransferase family.

The protein localises to the cytoplasm. It catalyses the reaction beta-nicotinamide D-ribonucleotide + ATP + H(+) = diphosphate + NAD(+). The protein operates within cofactor biosynthesis; NAD(+) biosynthesis; NAD(+) from nicotinamide D-ribonucleotide: step 1/1. The protein is Nicotinamide-nucleotide adenylyltransferase of Methanosphaerula palustris (strain ATCC BAA-1556 / DSM 19958 / E1-9c).